The sequence spans 734 residues: Subtilisin-like protease (734 aa).

The signal sequence occupies residues 1–20; that stretch reads MTCICIFSIAFLLSFHLTTA. The region spanning 28–109 is the Inhibitor I9 domain; it reads TYIVHVDKPD…AKLEKVLTLH (82 aa). A Peptidase S8 domain is found at 114–591; the sequence is PNFLGLYQNM…AGHVNPSKAS (478 aa). The Charge relay system role is filled by aspartate 141. The N-linked (GlcNAc...) asparagine glycan is linked to asparagine 172. The active-site Charge relay system is histidine 199. N-linked (GlcNAc...) asparagine glycosylation is found at asparagine 222 and asparagine 306. Residues 357–442 form the PA domain; sequence PLVYPGTSDE…THVGYAAGEM (86 aa). Asparagine 448 and asparagine 509 each carry an N-linked (GlcNAc...) asparagine glycan. Serine 524 acts as the Charge relay system in catalysis. An N-linked (GlcNAc...) asparagine glycan is attached at asparagine 652.

The protein belongs to the peptidase S8 family.

Its subcellular location is the secreted. The protein localises to the extracellular space. It localises to the apoplast. Its function is as follows. Required for arbuscular mycorrhiza (AM) development during AM symbiosis with AM fungi (e.g. Glomeromycota intraradices). The chain is Subtilisin-like protease from Petunia hybrida (Petunia).